Here is a 218-residue protein sequence, read N- to C-terminus: MSDNDELQQIAHLRREYTKGGLRRRDLPADPLTLFERWLSQACEAKLADPTAMVVATVDEHDQPYQRIVLLKHYDEKGMVFYTNLGSRKAHQIENNPRVSLLFPWHTLERQVMVIGKAERLSTLEVMKYFHSRPRDSQIGAWVSKQSSRISARGILESKFLELKQKFQQGEVPLPSFWGGFRVSLEQIEFWQGGEHRLHDRFLYQRENDAWKIDRLAP.

Residues 14 to 17 (RREY) and Lys72 each bind substrate. FMN-binding positions include 67 to 72 (RIVLLK), 82 to 83 (YT), Arg88, Lys89, and Gln111. Residues Tyr129, Arg133, and Ser137 each coordinate substrate. Residues 146–147 (QS) and Trp191 contribute to the FMN site. 197–199 (RLH) provides a ligand contact to substrate. Arg201 provides a ligand contact to FMN.

Belongs to the pyridoxamine 5'-phosphate oxidase family. Homodimer. FMN serves as cofactor.

It carries out the reaction pyridoxamine 5'-phosphate + O2 + H2O = pyridoxal 5'-phosphate + H2O2 + NH4(+). It catalyses the reaction pyridoxine 5'-phosphate + O2 = pyridoxal 5'-phosphate + H2O2. It participates in cofactor metabolism; pyridoxal 5'-phosphate salvage; pyridoxal 5'-phosphate from pyridoxamine 5'-phosphate: step 1/1. Its pathway is cofactor metabolism; pyridoxal 5'-phosphate salvage; pyridoxal 5'-phosphate from pyridoxine 5'-phosphate: step 1/1. Its function is as follows. Catalyzes the oxidation of either pyridoxine 5'-phosphate (PNP) or pyridoxamine 5'-phosphate (PMP) into pyridoxal 5'-phosphate (PLP). This chain is Pyridoxine/pyridoxamine 5'-phosphate oxidase, found in Escherichia coli O45:K1 (strain S88 / ExPEC).